Reading from the N-terminus, the 83-residue chain is Small ribosomal subunit protein bS18 (83 aa).

This sequence belongs to the bacterial ribosomal protein bS18 family. In terms of assembly, part of the 30S ribosomal subunit. Forms a tight heterodimer with protein bS6.

Binds as a heterodimer with protein bS6 to the central domain of the 16S rRNA, where it helps stabilize the platform of the 30S subunit. This is Small ribosomal subunit protein bS18 from Desulfosudis oleivorans (strain DSM 6200 / JCM 39069 / Hxd3) (Desulfococcus oleovorans).